The following is an 85-amino-acid chain: Acyl carrier protein (85 aa).

Residues 4–79 (DELFEKVKEI…NAVNLLSEKL (76 aa)) form the Carrier domain. Ser-39 carries the post-translational modification O-(pantetheine 4'-phosphoryl)serine.

This sequence belongs to the acyl carrier protein (ACP) family. Post-translationally, 4'-phosphopantetheine is transferred from CoA to a specific serine of apo-ACP by AcpS. This modification is essential for activity because fatty acids are bound in thioester linkage to the sulfhydryl of the prosthetic group.

It localises to the cytoplasm. It functions in the pathway lipid metabolism; fatty acid biosynthesis. Functionally, carrier of the growing fatty acid chain in fatty acid biosynthesis. The protein is Acyl carrier protein of Petrotoga mobilis (strain DSM 10674 / SJ95).